The chain runs to 307 residues: Transmembrane and coiled-coil domain-containing protein 5B (307 aa).

A coiled-coil region spans residues 20–212; that stretch reads TLEAIKQNLK…SKAQNDSSQV (193 aa). Residues 246 to 268 traverse the membrane as a helical segment; it reads YLFFMVMIVIRLLGYVFFHLQYV.

The protein belongs to the TMCO5 family.

It localises to the membrane. This is Transmembrane and coiled-coil domain-containing protein 5B (Tmco5b) from Mus musculus (Mouse).